A 98-amino-acid chain; its full sequence is Large ribosomal subunit protein bL28 (98 aa).

It belongs to the bacterial ribosomal protein bL28 family.

The protein is Large ribosomal subunit protein bL28 of Thermus thermophilus (strain ATCC BAA-163 / DSM 7039 / HB27).